The following is a 490-amino-acid chain: Probable cytosol aminopeptidase (490 aa).

Residues Lys-256 and Asp-261 each contribute to the Mn(2+) site. Lys-268 is a catalytic residue. Mn(2+) is bound by residues Asp-280, Asp-340, and Glu-342. The active site involves Arg-344.

This sequence belongs to the peptidase M17 family. The cofactor is Mn(2+).

Its subcellular location is the cytoplasm. It carries out the reaction Release of an N-terminal amino acid, Xaa-|-Yaa-, in which Xaa is preferably Leu, but may be other amino acids including Pro although not Arg or Lys, and Yaa may be Pro. Amino acid amides and methyl esters are also readily hydrolyzed, but rates on arylamides are exceedingly low.. The catalysed reaction is Release of an N-terminal amino acid, preferentially leucine, but not glutamic or aspartic acids.. In terms of biological role, presumably involved in the processing and regular turnover of intracellular proteins. Catalyzes the removal of unsubstituted N-terminal amino acids from various peptides. The chain is Probable cytosol aminopeptidase from Synechococcus sp. (strain CC9902).